Reading from the N-terminus, the 531-residue chain is CTP synthase (531 aa).

The interval 1–267 (MTKYIFVTGG…DQIVCEHLRL (267 aa)) is amidoligase domain. Ser-13 contributes to the CTP binding site. Ser-13 serves as a coordination point for UTP. 14-19 (SLGKGI) is an ATP binding site. Tyr-54 contacts L-glutamine. Position 71 (Asp-71) interacts with ATP. Residues Asp-71 and Glu-141 each contribute to the Mg(2+) site. CTP contacts are provided by residues 148–150 (DIE), 188–193 (KTKPTQ), and Lys-224. UTP contacts are provided by residues 188–193 (KTKPTQ) and Lys-224. 240–242 (RDA) provides a ligand contact to ATP. The region spanning 292–531 (KIALVGKYVE…REFVRASLKE (240 aa)) is the Glutamine amidotransferase type-1 domain. Residue Gly-354 participates in L-glutamine binding. Cys-381 (nucleophile; for glutamine hydrolysis) is an active-site residue. L-glutamine contacts are provided by residues 382 to 385 (LGMQ), Glu-405, and Arg-462. Catalysis depends on residues His-507 and Glu-509.

This sequence belongs to the CTP synthase family. As to quaternary structure, homotetramer.

The catalysed reaction is UTP + L-glutamine + ATP + H2O = CTP + L-glutamate + ADP + phosphate + 2 H(+). It carries out the reaction L-glutamine + H2O = L-glutamate + NH4(+). The enzyme catalyses UTP + NH4(+) + ATP = CTP + ADP + phosphate + 2 H(+). It participates in pyrimidine metabolism; CTP biosynthesis via de novo pathway; CTP from UDP: step 2/2. With respect to regulation, allosterically activated by GTP, when glutamine is the substrate; GTP has no effect on the reaction when ammonia is the substrate. The allosteric effector GTP functions by stabilizing the protein conformation that binds the tetrahedral intermediate(s) formed during glutamine hydrolysis. Inhibited by the product CTP, via allosteric rather than competitive inhibition. Catalyzes the ATP-dependent amination of UTP to CTP with either L-glutamine or ammonia as the source of nitrogen. Regulates intracellular CTP levels through interactions with the four ribonucleotide triphosphates. The protein is CTP synthase of Geobacillus kaustophilus (strain HTA426).